The sequence spans 96 residues: RING finger protein Z (96 aa).

The segment covering 1–10 (MGNCRSKQES) has biased composition (basic and acidic residues). Residues 1–21 (MGNCRSKQESHPICPNTQTPE) form a disordered region. Gly2 carries N-myristoyl glycine; by host lipidation. The RING-type; atypical zinc-finger motif lies at 41 to 77 (CKCCWFADRNLINCSDHYLCLRCLNVMLRTSNLCNIC). A PTAP/PSAP motif motif is present at residues 91–94 (PTAP).

Belongs to the arenaviridae Z protein family. Interacts with protein NP; this interaction probably directs the encapsidated genome to budding sites. Interacts (via RING domain) with polymerase L; this interaction inhibits viral transcription and replication, Z partially blocks the product exit tunnel for the releasing nascent RNA product. Interacts with the glycoprotein complex; this interaction plays a role in virion budding. Interacts with host eIF4E; this interaction results in eIF4E reduced affinity for its substrate, the 5'-m7 G cap structure. Interacts (via late-budding domain) with host TSG101; this interaction is essential for budding and release of viral particles. Interacts with host RPLP0; this interaction may serve to load ribosome-like particles inside the virion. Interacts with host PML; this interaction induces PML bodies redistribution in the cytoplasm upon viral infection. Post-translationally, myristoylation is required for the role of RING finger protein Z in assembly and budding.

Its subcellular location is the virion. The protein localises to the host cytoplasm. The protein resides in the host perinuclear region. It is found in the host cell membrane. Plays a crucial role in virion assembly and budding. Expressed late in the virus life cycle, it acts as an inhibitor of viral transcription and RNA synthesis by interacting with the viral polymerase L. Presumably recruits the NP encapsidated genome to cellular membranes at budding sites via direct interaction with NP. Plays critical roles in the final steps of viral release by interacting with host TSG101, a member of the vacuolar protein-sorting pathway and using other cellular host proteins involved in vesicle formation pathway. The budding of the virus progeny occurs after association of protein Z with the viral glycoprotein complex SSP-GP1-GP2 at the cell periphery, step that requires myristoylation of protein Z. Also selectively represses protein production by associating with host eIF4E. In cell-based minigenome assay, has an inhibitory effect on the ribonucleoprotein machinery (vRNP), which is responsible for the replication and transcription of the viral genome. This Hylaeamys megacephalus (Large-headed rice rat) protein is RING finger protein Z.